The following is a 1035-amino-acid chain: Sialidase A (1035 aa).

The signal sequence occupies residues 1–53 (MSYFRNRDIDIERNSMNRSVQERKCRYSIRKLSVGAVSMIVGAVVFGTSPVLA). The segment at 57-112 (ASEQPLANETQLSGESSTLTDTEKSQPSSETELSGNKQEQERKDKQEEKIPRDYYA) is disordered. Residues 61 to 92 (PLANETQLSGESSTLTDTEKSQPSSETELSGN) are compositionally biased toward polar residues. The span at 94–112 (QEQERKDKQEEKIPRDYYA) shows a compositional bias: basic and acidic residues. Arg347 is a substrate binding site. The active-site Proton acceptor is the Asp372. 3 BNR repeats span residues 381-392 (RRSEDNGKTWGD), 539-550 (SYSDDDGKTWSA), and 607-618 (IYSDDHGKTWHA). Glu647 is an active-site residue. Residue Arg663 participates in substrate binding. A BNR 4 repeat occupies 672–683 (ATSKDGGVTWEK). Residues 902–951 (GPLGTSGEEPAPTVEKPEYTGPLGTSGEEPAPTVEKPEYTGPLGTAGEEA) are disordered. Residues 1003-1007 (LPETG) carry the LPXTG sorting signal motif. Pentaglycyl murein peptidoglycan amidated threonine is present on Thr1006. Residues 1007–1035 (GNKESDLLASLGLTAFFLGLFTLGKKREQ) constitute a propeptide, removed by sortase.

This sequence belongs to the glycosyl hydrolase 33 family.

It localises to the secreted. Its subcellular location is the cell wall. It catalyses the reaction Hydrolysis of alpha-(2-&gt;3)-, alpha-(2-&gt;6)-, alpha-(2-&gt;8)- glycosidic linkages of terminal sialic acid residues in oligosaccharides, glycoproteins, glycolipids, colominic acid and synthetic substrates.. The protein is Sialidase A (nanA) of Streptococcus pneumoniae.